The chain runs to 941 residues: Bifunctional glutamine synthetase adenylyltransferase/adenylyl-removing enzyme (941 aa).

The segment at 1–431 is adenylyl removase; that stretch reads MSSAPPFAAA…TFRNAFRLAG (431 aa). An adenylyl transferase region spans residues 447–941; sequence NGHAMRPHAG…DGTIAQAEVK (495 aa).

Belongs to the GlnE family. Mg(2+) serves as cofactor.

The catalysed reaction is [glutamine synthetase]-O(4)-(5'-adenylyl)-L-tyrosine + phosphate = [glutamine synthetase]-L-tyrosine + ADP. The enzyme catalyses [glutamine synthetase]-L-tyrosine + ATP = [glutamine synthetase]-O(4)-(5'-adenylyl)-L-tyrosine + diphosphate. Functionally, involved in the regulation of glutamine synthetase GlnA, a key enzyme in the process to assimilate ammonia. When cellular nitrogen levels are high, the C-terminal adenylyl transferase (AT) inactivates GlnA by covalent transfer of an adenylyl group from ATP to specific tyrosine residue of GlnA, thus reducing its activity. Conversely, when nitrogen levels are low, the N-terminal adenylyl removase (AR) activates GlnA by removing the adenylyl group by phosphorolysis, increasing its activity. The regulatory region of GlnE binds the signal transduction protein PII (GlnB) which indicates the nitrogen status of the cell. This chain is Bifunctional glutamine synthetase adenylyltransferase/adenylyl-removing enzyme, found in Bordetella pertussis (strain Tohama I / ATCC BAA-589 / NCTC 13251).